Consider the following 430-residue polypeptide: Enolase (430 aa).

Glutamine 164 is a (2R)-2-phosphoglycerate binding site. The active-site Proton donor is glutamate 206. Mg(2+) is bound by residues aspartate 243, glutamate 288, and aspartate 315. The (2R)-2-phosphoglycerate site is built by lysine 340, arginine 369, serine 370, and lysine 391. The active-site Proton acceptor is lysine 340.

This sequence belongs to the enolase family. The cofactor is Mg(2+).

It is found in the cytoplasm. The protein resides in the secreted. It localises to the cell surface. It carries out the reaction (2R)-2-phosphoglycerate = phosphoenolpyruvate + H2O. Its pathway is carbohydrate degradation; glycolysis; pyruvate from D-glyceraldehyde 3-phosphate: step 4/5. In terms of biological role, catalyzes the reversible conversion of 2-phosphoglycerate (2-PG) into phosphoenolpyruvate (PEP). It is essential for the degradation of carbohydrates via glycolysis. The sequence is that of Enolase from Lysinibacillus sphaericus (strain C3-41).